We begin with the raw amino-acid sequence, 290 residues long: Protein MGF 110-9L (290 aa).

The first 19 residues, 1–19 (MKVIVLLLVLAVMQPVIQS), serve as a signal peptide directing secretion. The stretch at 1–160 (MKVIVLLLVL…QYSRMRMQAA (160 aa)) is one A repeat. 2 helical membrane-spanning segments follow: residues 128–148 (VENIKHTCLCMIATIALIGYV) and 163–183 (LLIFLGLYVLLGILMTNIIMN). A B repeat occupies 161–290 (TRLLIFLGLY…KRHVINQDDL (130 aa)).

The protein belongs to the asfivirus MGF 110 family.

The protein resides in the membrane. The polypeptide is Protein MGF 110-9L (Ornithodoros (relapsing fever ticks)).